The sequence spans 425 residues: Dihydroorotase (425 aa).

2 residues coordinate Zn(2+): His-61 and His-63. Substrate-binding positions include 63–65 (HLR) and Asn-95. Zn(2+)-binding residues include Asp-153, His-180, and His-233. Substrate is bound at residue Asn-279. Zn(2+) is bound at residue Asp-306. Asp-306 is an active-site residue. Residue His-310 participates in substrate binding.

Belongs to the metallo-dependent hydrolases superfamily. DHOase family. Class I DHOase subfamily. Zn(2+) is required as a cofactor.

The catalysed reaction is (S)-dihydroorotate + H2O = N-carbamoyl-L-aspartate + H(+). The protein operates within pyrimidine metabolism; UMP biosynthesis via de novo pathway; (S)-dihydroorotate from bicarbonate: step 3/3. Catalyzes the reversible cyclization of carbamoyl aspartate to dihydroorotate. The protein is Dihydroorotase of Trichlorobacter lovleyi (strain ATCC BAA-1151 / DSM 17278 / SZ) (Geobacter lovleyi).